The sequence spans 409 residues: Microfibrillar-associated protein 3-like (409 aa).

A signal peptide spans 1–28; it reads MDRLKSHLTVCFLPSVPFLILVSTLATA. Over 29–149 the chain is Extracellular; that stretch reads KSVTNSTLNG…LRVIFTSGDM (121 aa). Residues asparagine 33, asparagine 37, asparagine 67, asparagine 111, and asparagine 135 are each glycosylated (N-linked (GlcNAc...) asparagine). An Ig-like C2-type domain is found at 47–141; the sequence is PVIIARTDHI…GTVNNTVTLR (95 aa). Cysteines 68 and 125 form a disulfide. A helical transmembrane segment spans residues 150–172; sequence GVYYMVVCLVAFTIVMVLNITRL. Topologically, residues 173–409 are cytoplasmic; the sequence is CMMSSHLKKT…NTCIIYESHV (237 aa). Tyrosine 287 carries the post-translational modification Phosphotyrosine; by EGFR. Disordered stretches follow at residues 292–311 and 320–385; these read SLKR…LHEQ and SVHP…VLPP. Residues serine 298, serine 303, serine 306, and serine 307 each carry the phosphoserine modification. A compositionally biased stretch (basic and acidic residues) spans 339-355; it reads EVKDVEETELSAEHSPE. Over residues 363-377 the composition is skewed to low complexity; the sequence is VTSTELTSEEPTPVE.

In terms of tissue distribution, highly expressed in testis.

It localises to the cell membrane. Its subcellular location is the nucleus. The protein resides in the cytoplasm. Functionally, may participate in the nuclear signaling of EGFR and MAPK1/ERK2. May a have a role in metastasis. This is Microfibrillar-associated protein 3-like (MFAP3L) from Homo sapiens (Human).